A 200-amino-acid polypeptide reads, in one-letter code: Charged multivesicular body protein 6-B (200 aa).

G2 carries N-myristoyl glycine lipidation. The stretch at 9–102 forms a coiled coil; that stretch reads RRSRVTEQDK…FAQIEMKVIE (94 aa). The disordered stretch occupies residues 165–200; that stretch reads QEDLELPEAPSEPLSDTVPEKQAVKNRPKPQLVAAS. A Type-2 MIT-interacting motif motif is present at residues 168–179; sequence LELPEAPSEPLS.

The protein belongs to the SNF7 family. Probable core component of the endosomal sorting required for transport complex III (ESCRT-III). ESCRT-III components are thought to multimerize to form a flat lattice on the perimeter membrane of the endosome.

It is found in the endomembrane system. It localises to the late endosome membrane. Probable core component of the endosomal sorting required for transport complex III (ESCRT-III) which is involved in multivesicular bodies (MVBs) formation and sorting of endosomal cargo proteins into MVBs. MVBs contain intraluminal vesicles (ILVs) that are generated by invagination and scission from the limiting membrane of the endosome and mostly are delivered to lysosomes enabling degradation of membrane proteins, such as stimulated growth factor receptors, lysosomal enzymes and lipids. In the ESCRT-III complex, it probably serves as an acceptor for the ESCRT-II complex on endosomal membranes. The chain is Charged multivesicular body protein 6-B (chmp6-b) from Xenopus laevis (African clawed frog).